A 62-amino-acid polypeptide reads, in one-letter code: Protein P14 (62 aa).

Needed for optimal phage development. The protein is Protein P14 (P14) of Pseudomonas savastanoi pv. phaseolicola (Pseudomonas syringae pv. phaseolicola).